The following is a 290-amino-acid chain: 33 kDa chaperonin (290 aa).

2 cysteine pairs are disulfide-bonded: Cys-231-Cys-233 and Cys-264-Cys-267.

This sequence belongs to the HSP33 family. In terms of processing, under oxidizing conditions two disulfide bonds are formed involving the reactive cysteines. Under reducing conditions zinc is bound to the reactive cysteines and the protein is inactive.

The protein localises to the cytoplasm. Functionally, redox regulated molecular chaperone. Protects both thermally unfolding and oxidatively damaged proteins from irreversible aggregation. Plays an important role in the bacterial defense system toward oxidative stress. The chain is 33 kDa chaperonin from Photorhabdus laumondii subsp. laumondii (strain DSM 15139 / CIP 105565 / TT01) (Photorhabdus luminescens subsp. laumondii).